We begin with the raw amino-acid sequence, 285 residues long: Polyamine aminopropyltransferase (285 aa).

The PABS domain maps to 5 to 238 (EMWYETLHTG…GIMTFAWASD (234 aa)). Residue Q33 participates in S-methyl-5'-thioadenosine binding. Residues H64 and D88 each coordinate spermidine. S-methyl-5'-thioadenosine is bound by residues E108 and 140-141 (DG). Catalysis depends on D158, which acts as the Proton acceptor. A spermidine-binding site is contributed by 158–161 (DCTD). P165 contributes to the S-methyl-5'-thioadenosine binding site.

It belongs to the spermidine/spermine synthase family. Homodimer or homotetramer.

The protein localises to the cytoplasm. The catalysed reaction is S-adenosyl 3-(methylsulfanyl)propylamine + putrescine = S-methyl-5'-thioadenosine + spermidine + H(+). Its pathway is amine and polyamine biosynthesis; spermidine biosynthesis; spermidine from putrescine: step 1/1. In terms of biological role, catalyzes the irreversible transfer of a propylamine group from the amino donor S-adenosylmethioninamine (decarboxy-AdoMet) to putrescine (1,4-diaminobutane) to yield spermidine. The sequence is that of Polyamine aminopropyltransferase from Erwinia tasmaniensis (strain DSM 17950 / CFBP 7177 / CIP 109463 / NCPPB 4357 / Et1/99).